A 341-amino-acid chain; its full sequence is Ketol-acid reductoisomerase (NADP(+)) (341 aa).

The 181-residue stretch at 2–182 (TDIVYDKDAD…GGLRAGGIRT (181 aa)) folds into the KARI N-terminal Rossmann domain. Residues 25–28 (YGSQ), K48, S51, S53, and 83–86 (DQHQ) contribute to the NADP(+) site. Residue H108 is part of the active site. G134 provides a ligand contact to NADP(+). Positions 183 to 328 (TFTEETETDL…RELRKLFAWN (146 aa)) constitute a KARI C-terminal knotted domain. Residues D191, E195, E227, and E231 each coordinate Mg(2+). S252 lines the substrate pocket.

Belongs to the ketol-acid reductoisomerase family. Requires Mg(2+) as cofactor.

It carries out the reaction (2R)-2,3-dihydroxy-3-methylbutanoate + NADP(+) = (2S)-2-acetolactate + NADPH + H(+). The catalysed reaction is (2R,3R)-2,3-dihydroxy-3-methylpentanoate + NADP(+) = (S)-2-ethyl-2-hydroxy-3-oxobutanoate + NADPH + H(+). It functions in the pathway amino-acid biosynthesis; L-isoleucine biosynthesis; L-isoleucine from 2-oxobutanoate: step 2/4. Its pathway is amino-acid biosynthesis; L-valine biosynthesis; L-valine from pyruvate: step 2/4. In terms of biological role, involved in the biosynthesis of branched-chain amino acids (BCAA). Catalyzes an alkyl-migration followed by a ketol-acid reduction of (S)-2-acetolactate (S2AL) to yield (R)-2,3-dihydroxy-isovalerate. In the isomerase reaction, S2AL is rearranged via a Mg-dependent methyl migration to produce 3-hydroxy-3-methyl-2-ketobutyrate (HMKB). In the reductase reaction, this 2-ketoacid undergoes a metal-dependent reduction by NADPH to yield (R)-2,3-dihydroxy-isovalerate. The polypeptide is Ketol-acid reductoisomerase (NADP(+)) (Clavibacter michiganensis subsp. michiganensis (strain NCPPB 382)).